Consider the following 285-residue polypeptide: Phosphate import ATP-binding protein PstB (285 aa).

The ABC transporter domain maps to 22-262; sequence MRAVDLTLGF…PQHEETVRYF (241 aa). 54 to 61 lines the ATP pocket; it reads GPTGSGKT. The tract at residues 266 to 285 is disordered; the sequence is RPAQGSDRGSSQTAGVAESQ. Positions 272-285 are enriched in polar residues; the sequence is DRGSSQTAGVAESQ.

The protein belongs to the ABC transporter superfamily. Phosphate importer (TC 3.A.1.7) family. In terms of assembly, the complex is composed of two ATP-binding proteins (PstB), two transmembrane proteins (PstC and PstA) and a solute-binding protein (PstS).

The protein localises to the cell membrane. It carries out the reaction phosphate(out) + ATP + H2O = ADP + 2 phosphate(in) + H(+). Its function is as follows. Part of the ABC transporter complex PstSACB involved in phosphate import. Responsible for energy coupling to the transport system. The polypeptide is Phosphate import ATP-binding protein PstB (Mycobacterium intracellulare).